The sequence spans 477 residues: Glutamyl-tRNA(Gln) amidotransferase subunit A (477 aa).

Active-site charge relay system residues include lysine 71 and serine 146. The Acyl-ester intermediate role is filled by serine 170.

Belongs to the amidase family. GatA subfamily. As to quaternary structure, heterotrimer of A, B and C subunits.

The enzyme catalyses L-glutamyl-tRNA(Gln) + L-glutamine + ATP + H2O = L-glutaminyl-tRNA(Gln) + L-glutamate + ADP + phosphate + H(+). Its function is as follows. Allows the formation of correctly charged Gln-tRNA(Gln) through the transamidation of misacylated Glu-tRNA(Gln) in organisms which lack glutaminyl-tRNA synthetase. The reaction takes place in the presence of glutamine and ATP through an activated gamma-phospho-Glu-tRNA(Gln). This Halothermothrix orenii (strain H 168 / OCM 544 / DSM 9562) protein is Glutamyl-tRNA(Gln) amidotransferase subunit A.